The chain runs to 140 residues: Small ribosomal subunit protein bS6 (140 aa).

The tract at residues 96–140 (VTGQSEMLKAEENRSERRERRDRPEHEGADSADSDDSDNSDNADE) is disordered. Basic and acidic residues predominate over residues 103 to 124 (LKAEENRSERRERRDRPEHEGA). Residues 125-140 (DSADSDDSDNSDNADE) are compositionally biased toward acidic residues.

It belongs to the bacterial ribosomal protein bS6 family.

Binds together with bS18 to 16S ribosomal RNA. The sequence is that of Small ribosomal subunit protein bS6 from Pseudomonas fluorescens (strain SBW25).